The chain runs to 392 residues: Pannexin-3 (392 aa).

Residues 1 to 39 (MSLAHTAAEYMLSDALLPDRRGSRLKGLRLELPLDKMVK) lie on the Cytoplasmic side of the membrane. A helical membrane pass occupies residues 40–60 (FITVGFPLLLMSLAFAQEFSS). Topologically, residues 61-113 (GSPISCFSPSNFSVRQAAYVDSSCWDSLAHHTQDKAGQYKVKSLWPHKALPYS) are extracellular. A glycan (N-linked (GlcNAc...) asparagine) is linked at N71. Residues 114–134 (LLALAVAMYLPVLLWQYVAVP) traverse the membrane as a helical segment. Over 135–215 (SLSSDLLFII…VATYLLRNAL (81 aa)) the chain is Cytoplasmic. Residues 216–236 (LLLFTSATYLYLGQFHLDVFF) form a helical membrane-spanning segment. The Extracellular segment spans residues 237–267 (QDEFNCFIKTGLLHDETHVPELITCRLTSLS). A helical membrane pass occupies residues 268 to 288 (VFQIVSVSSAAIYTILVPVII). The Cytoplasmic portion of the chain corresponds to 289–392 (YNLTRLCRWD…LTQHTYDEHA (104 aa)).

It belongs to the pannexin family. As to quaternary structure, homoheptameric. Post-translationally, N-glycosylation may play a role in cell surface targeting. Expressed in skin, cartilage, heart, lung, liver, spleen, thymus and kidney. Not expressed in brain. Expressed in calvarial cells.

The protein resides in the cell membrane. Its subcellular location is the endoplasmic reticulum membrane. It catalyses the reaction Ca(2+)(in) = Ca(2+)(out). The enzyme catalyses ATP(in) = ATP(out). Its function is as follows. Regulator of osteoblast differentiation by functionning as a Ca(2+) channel in the endoplasmic reticulum which regulates calmodulin (CaM) pathways. Allows ATP release into the extracellular space and activation or purinergic receptors. The chain is Pannexin-3 (Panx3) from Mus musculus (Mouse).